The chain runs to 947 residues: Coiled-coil domain-containing protein 39 (947 aa).

4 coiled-coil regions span residues 16-194, 221-402, 471-522, and 582-813; these read AIPV…TLDN, QELI…KELL, KVNT…TEKI, and VLTL…IRSG. Composition is skewed to low complexity over residues 866-911 and 926-947; these read SLPS…VSSP and SPRG…CKSP. Residues 866–947 are disordered; sequence SLPSPSSTPS…SRSSSKCKSP (82 aa).

Belongs to the CCDC39 family.

It localises to the cytoplasm. The protein resides in the cytoskeleton. It is found in the cilium axoneme. Functionally, required for assembly of dynein regulatory complex (DRC) and inner dynein arm (IDA) complexes, which are responsible for ciliary beat regulation, thereby playing a central role in motility in cilia and flagella. Probably acts together with ccdc40 to form a molecular ruler that determines the 96 nanometer (nm) repeat length and arrangements of components in cilia and flagella. Not required for outer dynein arm complexes assembly. The chain is Coiled-coil domain-containing protein 39 (ccdc39) from Danio rerio (Zebrafish).